The following is a 497-amino-acid chain: Protein nucleotidyltransferase YdiU (497 aa).

ATP-binding residues include glycine 88, glycine 90, arginine 91, lysine 110, aspartate 122, glycine 123, arginine 173, and arginine 180. The Proton acceptor role is filled by aspartate 249. Residues asparagine 250 and aspartate 259 each coordinate Mg(2+). Aspartate 259 is a binding site for ATP.

This sequence belongs to the SELO family. Requires Mg(2+) as cofactor. It depends on Mn(2+) as a cofactor.

It catalyses the reaction L-seryl-[protein] + ATP = 3-O-(5'-adenylyl)-L-seryl-[protein] + diphosphate. It carries out the reaction L-threonyl-[protein] + ATP = 3-O-(5'-adenylyl)-L-threonyl-[protein] + diphosphate. The enzyme catalyses L-tyrosyl-[protein] + ATP = O-(5'-adenylyl)-L-tyrosyl-[protein] + diphosphate. The catalysed reaction is L-histidyl-[protein] + UTP = N(tele)-(5'-uridylyl)-L-histidyl-[protein] + diphosphate. It catalyses the reaction L-seryl-[protein] + UTP = O-(5'-uridylyl)-L-seryl-[protein] + diphosphate. It carries out the reaction L-tyrosyl-[protein] + UTP = O-(5'-uridylyl)-L-tyrosyl-[protein] + diphosphate. Nucleotidyltransferase involved in the post-translational modification of proteins. It can catalyze the addition of adenosine monophosphate (AMP) or uridine monophosphate (UMP) to a protein, resulting in modifications known as AMPylation and UMPylation. The protein is Protein nucleotidyltransferase YdiU of Methylorubrum extorquens (strain CM4 / NCIMB 13688) (Methylobacterium extorquens).